Here is a 424-residue protein sequence, read N- to C-terminus: Phosphomethylpyrimidine synthase (424 aa).

Substrate contacts are provided by residues M94, Y123, H162, 184–186, 225–228, and E264; these read SRG and NGMR. H268 contacts Zn(2+). Y291 serves as a coordination point for substrate. Zn(2+) is bound at residue H332. Residues C406, C409, and C413 each contribute to the [4Fe-4S] cluster site.

It belongs to the ThiC family. Requires [4Fe-4S] cluster as cofactor.

The enzyme catalyses 5-amino-1-(5-phospho-beta-D-ribosyl)imidazole + S-adenosyl-L-methionine = 4-amino-2-methyl-5-(phosphooxymethyl)pyrimidine + CO + 5'-deoxyadenosine + formate + L-methionine + 3 H(+). Its pathway is cofactor biosynthesis; thiamine diphosphate biosynthesis. Catalyzes the synthesis of the hydroxymethylpyrimidine phosphate (HMP-P) moiety of thiamine from aminoimidazole ribotide (AIR) in a radical S-adenosyl-L-methionine (SAM)-dependent reaction. The polypeptide is Phosphomethylpyrimidine synthase (Methanosphaerula palustris (strain ATCC BAA-1556 / DSM 19958 / E1-9c)).